Reading from the N-terminus, the 313-residue chain is tRNA-cytidine(32) 2-sulfurtransferase (313 aa).

The PP-loop motif motif lies at serine 47–serine 52. [4Fe-4S] cluster contacts are provided by cysteine 122, cysteine 125, and cysteine 213.

The protein belongs to the TtcA family. In terms of assembly, homodimer. Mg(2+) is required as a cofactor. The cofactor is [4Fe-4S] cluster.

The protein localises to the cytoplasm. It carries out the reaction cytidine(32) in tRNA + S-sulfanyl-L-cysteinyl-[cysteine desulfurase] + AH2 + ATP = 2-thiocytidine(32) in tRNA + L-cysteinyl-[cysteine desulfurase] + A + AMP + diphosphate + H(+). It participates in tRNA modification. Its function is as follows. Catalyzes the ATP-dependent 2-thiolation of cytidine in position 32 of tRNA, to form 2-thiocytidine (s(2)C32). The sulfur atoms are provided by the cysteine/cysteine desulfurase (IscS) system. The polypeptide is tRNA-cytidine(32) 2-sulfurtransferase (Yersinia enterocolitica serotype O:8 / biotype 1B (strain NCTC 13174 / 8081)).